The sequence spans 238 residues: Probable septum site-determining protein MinC (238 aa).

The protein belongs to the MinC family. In terms of assembly, interacts with MinD and FtsZ.

Cell division inhibitor that blocks the formation of polar Z ring septums. Rapidly oscillates between the poles of the cell to destabilize FtsZ filaments that have formed before they mature into polar Z rings. Prevents FtsZ polymerization. This chain is Probable septum site-determining protein MinC, found in Xylella fastidiosa (strain M23).